The following is a 902-amino-acid chain: HTH-type transcriptional regulator MalT (902 aa).

39–46 (SPAGYGKT) contributes to the ATP binding site. The HTH luxR-type domain maps to 832 to 897 (ELVRTSPLTQ…EAIVTAENLL (66 aa)). A DNA-binding region (H-T-H motif) is located at residues 856–875 (NEQIAQELDVAGTTIKTHIR).

This sequence belongs to the MalT family. As to quaternary structure, monomer in solution. Oligomerizes to an active state in the presence of the positive effectors ATP and maltotriose.

Activated by ATP and maltotriose, which are both required for DNA binding. In terms of biological role, positively regulates the transcription of the maltose regulon whose gene products are responsible for uptake and catabolism of malto-oligosaccharides. Specifically binds to the promoter region of its target genes, recognizing a short DNA motif called the MalT box. This Vibrio parahaemolyticus serotype O3:K6 (strain RIMD 2210633) protein is HTH-type transcriptional regulator MalT.